An 890-amino-acid polypeptide reads, in one-letter code: Inter-alpha-trypsin inhibitor heavy chain H3 (890 aa).

An N-terminal signal peptide occupies residues 1–20 (MAFAWWPCLILALLSSLAAS). Positions 21–34 (GFPRSPFRLLGKRS) are excised as a propeptide. One can recognise a VIT domain in the interval 29–158 (LLGKRSLPEG…KVTFELTYEE (130 aa)). N-linked (GlcNAc...) asparagine glycosylation occurs at Asn-91. The VWFA domain maps to 284–467 (NVAFVIDISG…LQLQGFYEEV (184 aa)). A glycan (N-linked (GlcNAc...) asparagine) is linked at Asn-580. Asp-651 is subject to Aspartate 1-(chondroitin 4-sulfate)-ester. A propeptide spanning residues 652–890 (PHFIIQIPEK…HTDYIVPNLF (239 aa)) is cleaved from the precursor.

Belongs to the ITIH family. In terms of assembly, I-alpha-I plasma protease inhibitors are assembled from one or two heavy chains (HC) and one light chain, bikunin. Pre-alpha-inhibitor (P-alpha-I) is composed of ITIH3/HC3 and bikunin. Post-translationally, heavy chains are linked to bikunin via chondroitin 4-sulfate esterified to the alpha-carboxyl of the C-terminal aspartate after propeptide cleavage.

It is found in the secreted. Functionally, may act as a carrier of hyaluronan in serum or as a binding protein between hyaluronan and other matrix protein, including those on cell surfaces in tissues to regulate the localization, synthesis and degradation of hyaluronan which are essential to cells undergoing biological processes. This chain is Inter-alpha-trypsin inhibitor heavy chain H3 (ITIH3), found in Homo sapiens (Human).